The sequence spans 529 residues: Zinc metalloproteinase MspA (529 aa).

Positions 1–24 (MHHNYYLSPLAVALALGMVSPAKA) are cleaved as a signal peptide. The propeptide occupies 25-204 (ADPILLQNAS…PFVQWNDIKT (180 aa)). A Zn(2+)-binding site is contributed by His-365. Glu-366 is a catalytic residue. Zn(2+) is bound by residues His-369 and Glu-389. His-451 (proton donor) is an active-site residue.

This sequence belongs to the peptidase M4 family. Requires Zn(2+) as cofactor.

This chain is Zinc metalloproteinase MspA (mspA), found in Legionella longbeachae.